Consider the following 94-residue polypeptide: Neurotoxin 213 (94 aa).

The first 22 residues, 1–22 (MLKFILTCTSVILFTAVEDSSC), serve as a signal peptide directing secretion. Residues 24–88 (KGGNYPISVY…YWDYHRNNCK (65 aa)) enclose the LCN-type CS-alpha/beta domain. Cystine bridges form between Cys39–Cys62, Cys48–Cys67, and Cys52–Cys69.

The protein belongs to the long (3 C-C) scorpion toxin superfamily. Expressed by the venom gland.

It is found in the secreted. This chain is Neurotoxin 213, found in Lychas mucronatus (Chinese swimming scorpion).